We begin with the raw amino-acid sequence, 508 residues long: Photosystem II CP47 reaction center protein (508 aa).

6 helical membrane-spanning segments follow: residues 21-36 (SVHI…WAGS), 101-115 (IVFS…IWHW), 140-156 (GIHL…FGAF), 203-218 (IAAG…FHLS), 237-252 (VLSS…AFVV), and 457-472 (SFAL…HGAR).

Belongs to the PsbB/PsbC family. PsbB subfamily. PSII is composed of 1 copy each of membrane proteins PsbA, PsbB, PsbC, PsbD, PsbE, PsbF, PsbH, PsbI, PsbJ, PsbK, PsbL, PsbM, PsbT, PsbX, PsbY, PsbZ, Psb30/Ycf12, at least 3 peripheral proteins of the oxygen-evolving complex and a large number of cofactors. It forms dimeric complexes. Requires Binds multiple chlorophylls. PSII binds additional chlorophylls, carotenoids and specific lipids. as cofactor.

The protein localises to the plastid. The protein resides in the chloroplast thylakoid membrane. Its function is as follows. One of the components of the core complex of photosystem II (PSII). It binds chlorophyll and helps catalyze the primary light-induced photochemical processes of PSII. PSII is a light-driven water:plastoquinone oxidoreductase, using light energy to abstract electrons from H(2)O, generating O(2) and a proton gradient subsequently used for ATP formation. This Barbarea verna (Land cress) protein is Photosystem II CP47 reaction center protein.